A 1297-amino-acid polypeptide reads, in one-letter code: DNA-directed RNA polymerase subunit beta' (1297 aa).

4 residues coordinate Zn(2+): Cys60, Cys62, Cys75, and Cys78. Residues Asp535, Asp537, and Asp539 each contribute to the Mg(2+) site. Zn(2+) contacts are provided by Cys883, Cys961, Cys968, and Cys971.

This sequence belongs to the RNA polymerase beta' chain family. The RNAP catalytic core consists of 2 alpha, 1 beta, 1 beta' and 1 omega subunit. When a sigma factor is associated with the core the holoenzyme is formed, which can initiate transcription. Mg(2+) serves as cofactor. Zn(2+) is required as a cofactor.

It catalyses the reaction RNA(n) + a ribonucleoside 5'-triphosphate = RNA(n+1) + diphosphate. Its function is as follows. DNA-dependent RNA polymerase catalyzes the transcription of DNA into RNA using the four ribonucleoside triphosphates as substrates. The polypeptide is DNA-directed RNA polymerase subunit beta' (Salinispora tropica (strain ATCC BAA-916 / DSM 44818 / JCM 13857 / NBRC 105044 / CNB-440)).